The following is a 161-amino-acid chain: Small ribosomal subunit protein uS9 (161 aa).

Belongs to the universal ribosomal protein uS9 family.

In Rickettsia typhi (strain ATCC VR-144 / Wilmington), this protein is Small ribosomal subunit protein uS9.